We begin with the raw amino-acid sequence, 436 residues long: Trigger factor (436 aa).

The 86-residue stretch at 163 to 248 (GDRVTVDFEG…LKKIEAAHLP (86 aa)) folds into the PPIase FKBP-type domain.

Belongs to the FKBP-type PPIase family. Tig subfamily.

The protein resides in the cytoplasm. The catalysed reaction is [protein]-peptidylproline (omega=180) = [protein]-peptidylproline (omega=0). Its function is as follows. Involved in protein export. Acts as a chaperone by maintaining the newly synthesized protein in an open conformation. Functions as a peptidyl-prolyl cis-trans isomerase. The chain is Trigger factor from Albidiferax ferrireducens (strain ATCC BAA-621 / DSM 15236 / T118) (Rhodoferax ferrireducens).